Reading from the N-terminus, the 331-residue chain is Inner membrane ABC transporter permease protein YjfF (331 aa).

Residues 1–5 (MIKRN) are Cytoplasmic-facing. A helical membrane pass occupies residues 6–26 (LPLMITIGVFVLGYLYCLTQF). Residues 27-42 (PGFASTRVICNILTDN) are Periplasmic-facing. A helical transmembrane segment spans residues 43 to 63 (AFLGIIAVGMTFVILSGGIDL). Residues 64-88 (SVGSVIAFTGVFLAKVIGDFGLSPL) are Cytoplasmic-facing. A helical transmembrane segment spans residues 89–109 (LAFPLVLVMGCAFGAFMGLLI). The Periplasmic segment spans residues 110–113 (DALK). Residues 114–134 (IPAFIITLAGMFFLRGVSYLV) traverse the membrane as a helical segment. Topologically, residues 135–159 (SEESIPINHPIYDTLSSLAWKIPGG) are cytoplasmic. A helical transmembrane segment spans residues 160 to 180 (GRLSAMGLLMLAVVVIGIFLA). Over 181–222 (HRTRFGNQVYAIGGNATSANLMGISTRSTTIRIYMLSTGLAT) the chain is Periplasmic. Residues 223 to 243 (LAGIVFSIYTQAGYALAGVGV) form a helical membrane-spanning segment. Residues 244–250 (ELDAIAS) lie on the Cytoplasmic side of the membrane. The chain crosses the membrane as a helical span at residues 251 to 271 (VVIGGTLLSGGVGTVLGTLFG). Over 272 to 294 (VAIQGLIQTYINFDGTLSSWWTK) the chain is Periplasmic. The chain crosses the membrane as a helical span at residues 295–315 (IAIGILLFIFIALQRGLTVLW). Residues 316-331 (ENRQSSPVTRVNIAQQ) lie on the Cytoplasmic side of the membrane.

Belongs to the binding-protein-dependent transport system permease family. AraH/RbsC subfamily. The complex is composed of two ATP-binding proteins (YtfR), two transmembrane proteins (YtfT and YjfF) and a solute-binding protein (YtfQ).

It localises to the cell inner membrane. In terms of biological role, part of the ABC transporter complex YtfQRT-YjfF involved in galactofuranose transport. Probably responsible for the translocation of the substrate across the membrane. This is Inner membrane ABC transporter permease protein YjfF (yjfF) from Escherichia coli (strain K12).